Consider the following 312-residue polypeptide: Ribonuclease Z (312 aa).

7 residues coordinate Zn(2+): H62, H64, D66, H67, H139, D210, and H268. Residue D66 is the Proton acceptor of the active site.

This sequence belongs to the RNase Z family. As to quaternary structure, homodimer. Requires Zn(2+) as cofactor.

The enzyme catalyses Endonucleolytic cleavage of RNA, removing extra 3' nucleotides from tRNA precursor, generating 3' termini of tRNAs. A 3'-hydroxy group is left at the tRNA terminus and a 5'-phosphoryl group is left at the trailer molecule.. Its function is as follows. Zinc phosphodiesterase, which displays some tRNA 3'-processing endonuclease activity. Probably involved in tRNA maturation, by removing a 3'-trailer from precursor tRNA. This is Ribonuclease Z from Crocosphaera subtropica (strain ATCC 51142 / BH68) (Cyanothece sp. (strain ATCC 51142)).